A 174-amino-acid chain; its full sequence is Adenine phosphoribosyltransferase (174 aa).

Belongs to the purine/pyrimidine phosphoribosyltransferase family. As to quaternary structure, homodimer.

The protein localises to the cytoplasm. The catalysed reaction is AMP + diphosphate = 5-phospho-alpha-D-ribose 1-diphosphate + adenine. It functions in the pathway purine metabolism; AMP biosynthesis via salvage pathway; AMP from adenine: step 1/1. Its function is as follows. Catalyzes a salvage reaction resulting in the formation of AMP, that is energically less costly than de novo synthesis. The chain is Adenine phosphoribosyltransferase from Lachnoclostridium phytofermentans (strain ATCC 700394 / DSM 18823 / ISDg) (Clostridium phytofermentans).